Here is a 211-residue protein sequence, read N- to C-terminus: Endonuclease III (211 aa).

One can recognise a HhH domain in the interval 111–130; the sequence is AHALESLPGVGHKTANVVLN. [4Fe-4S] cluster contacts are provided by Cys-190, Cys-197, Cys-200, and Cys-206.

Belongs to the Nth/MutY family. It depends on [4Fe-4S] cluster as a cofactor.

It carries out the reaction 2'-deoxyribonucleotide-(2'-deoxyribose 5'-phosphate)-2'-deoxyribonucleotide-DNA = a 3'-end 2'-deoxyribonucleotide-(2,3-dehydro-2,3-deoxyribose 5'-phosphate)-DNA + a 5'-end 5'-phospho-2'-deoxyribonucleoside-DNA + H(+). Functionally, DNA repair enzyme that has both DNA N-glycosylase activity and AP-lyase activity. The DNA N-glycosylase activity releases various damaged pyrimidines from DNA by cleaving the N-glycosidic bond, leaving an AP (apurinic/apyrimidinic) site. The AP-lyase activity cleaves the phosphodiester bond 3' to the AP site by a beta-elimination, leaving a 3'-terminal unsaturated sugar and a product with a terminal 5'-phosphate. The polypeptide is Endonuclease III (Treponema pallidum (strain Nichols)).